A 313-amino-acid polypeptide reads, in one-letter code: Ribosomal RNA small subunit methyltransferase H (313 aa).

S-adenosyl-L-methionine contacts are provided by residues 35 to 37, Asp55, Phe79, Asp100, and Gln107; that span reads GGH.

Belongs to the methyltransferase superfamily. RsmH family.

The protein resides in the cytoplasm. The catalysed reaction is cytidine(1402) in 16S rRNA + S-adenosyl-L-methionine = N(4)-methylcytidine(1402) in 16S rRNA + S-adenosyl-L-homocysteine + H(+). Specifically methylates the N4 position of cytidine in position 1402 (C1402) of 16S rRNA. The chain is Ribosomal RNA small subunit methyltransferase H from Burkholderia orbicola (strain MC0-3).